Reading from the N-terminus, the 323-residue chain is Large ribosomal subunit protein uL10 (323 aa).

Residues 296-323 (AAPAAPSAAAKEEPEESDEDDFGMGGLF) form a disordered region. Positions 308-317 (EPEESDEDDF) are enriched in acidic residues.

Belongs to the universal ribosomal protein uL10 family. P0 forms a pentameric complex by interaction with dimers of P1 and P2. In terms of processing, phosphorylated.

In terms of biological role, ribosomal protein P0 is the functional equivalent of E.coli protein L10. In Leishmania infantum, this protein is Large ribosomal subunit protein uL10 (LIPO-A).